Reading from the N-terminus, the 274-residue chain is Rhamnulose-1-phosphate aldolase (274 aa).

Glutamate 117 is a catalytic residue. Histidine 141, histidine 143, and histidine 212 together coordinate Zn(2+).

Belongs to the aldolase class II family. RhaD subfamily. In terms of assembly, homotetramer. Zn(2+) serves as cofactor.

It localises to the cytoplasm. The enzyme catalyses L-rhamnulose 1-phosphate = (S)-lactaldehyde + dihydroxyacetone phosphate. It functions in the pathway carbohydrate degradation; L-rhamnose degradation; glycerone phosphate from L-rhamnose: step 3/3. Catalyzes the reversible cleavage of L-rhamnulose-1-phosphate to dihydroxyacetone phosphate (DHAP) and L-lactaldehyde. The polypeptide is Rhamnulose-1-phosphate aldolase (Escherichia coli (strain SMS-3-5 / SECEC)).